Consider the following 248-residue polypeptide: Large ribosomal subunit protein uL30A (248 aa).

The segment at 1 to 44 (MSQKKQKIQVEQKVPENVAKKTQRDSKLRDAVAKRRTERLAANK) is disordered. Residues 8-41 (IQVEQKVPENVAKKTQRDSKLRDAVAKRRTERLA) show a composition bias toward basic and acidic residues.

This sequence belongs to the universal ribosomal protein uL30 family.

In terms of biological role, binds to G-rich structures in 28S rRNA and in mRNAs. Plays a regulatory role in the translation apparatus; inhibits cell-free translation of mRNAs. The chain is Large ribosomal subunit protein uL30A (Rpl7-1) from Paramecium tetraurelia.